Reading from the N-terminus, the 531-residue chain is Glucose-6-phosphate exchanger SLC37A1 (531 aa).

A helical membrane pass occupies residues 18-38 (QWYRAFIFMLTFLLYASFHLS). Positions 53 to 72 (CTAGDGPESPFSDPSSSTRH) are disordered. 11 helical membrane-spanning segments follow: residues 100 to 120 (GALD…SGII), 129 to 149 (YLTF…LGYF), 157 to 177 (FYVV…PSVV), 192 to 214 (IMGI…AGYW), 222 to 242 (SFIV…LFLI), 332 to 352 (LCLL…PLYI), 364 to 384 (GELS…AGVI), 392 to 412 (ASTC…FSSV), 419 to 439 (ATIA…ALIT), 464 to 484 (AIID…AGLI), and 488 to 508 (GWSN…LFLV).

Belongs to the major facilitator superfamily. Organophosphate:Pi antiporter (OPA) (TC 2.A.1.4) family.

The protein localises to the endoplasmic reticulum membrane. The catalysed reaction is D-glucose 6-phosphate(in) + phosphate(out) = D-glucose 6-phosphate(out) + phosphate(in). Inhibited by vanadate but not by chlorogenic acid. Inorganic phosphate and glucose-6-phosphate antiporter. May transport cytoplasmic glucose-6-phosphate into the lumen of the endoplasmic reticulum and translocate inorganic phosphate into the opposite direction. Independent of a lumenal glucose-6-phosphatase. May not play a role in homeostatic regulation of blood glucose levels. The polypeptide is Glucose-6-phosphate exchanger SLC37A1 (Mus musculus (Mouse)).